The chain runs to 241 residues: MSDDDSSHDLPAANLQQLRLPDSASLRPAFSTHRPRILILYGSLRTVSYSRLLAEEARRLLEFFGAEVKVFDPSGLPLPDAAPVSHPKVQELRELSIWSEGQVWVSPERHGAMTGIMKAQIDWIPLSTGSIRPTQGKTLAVMQVSGGSQSFNAVNQMRILGRWMRMITIPNQSSVAKAFQEFDANGRMKPSSYYDRVVDVMEELVKFTLLTRDCSAYLTDRYSERKESAAELEHRVTLKSV.

An FMN-binding site is contributed by Ser43–Ser50.

The protein belongs to the ArsH family. As to quaternary structure, homotetramer. FMN serves as cofactor.

Its function is as follows. Has NADPH-dependent FMN reductase activity. No activity with NADH. May play a role in resistance to heavy metal toxicity. This Rhizobium meliloti (strain 1021) (Ensifer meliloti) protein is NADPH-dependent FMN reductase ArsH.